A 299-amino-acid polypeptide reads, in one-letter code: Probable lipid kinase YegS (299 aa).

Positions 2–133 (ADLPASLLIL…IDIAQVNKET (132 aa)) constitute a DAGKc domain. ATP contacts are provided by residues Thr40, 66 to 72 (GDGTINE), and Thr95. Mg(2+)-binding residues include Leu215, Asp218, and Leu220. Catalysis depends on Glu271, which acts as the Proton acceptor.

The protein belongs to the diacylglycerol/lipid kinase family. YegS lipid kinase subfamily. Mg(2+) serves as cofactor. Ca(2+) is required as a cofactor.

It is found in the cytoplasm. Functionally, probably phosphorylates lipids; the in vivo substrate is unknown. This is Probable lipid kinase YegS from Escherichia fergusonii (strain ATCC 35469 / DSM 13698 / CCUG 18766 / IAM 14443 / JCM 21226 / LMG 7866 / NBRC 102419 / NCTC 12128 / CDC 0568-73).